Consider the following 66-residue polypeptide: MPKMKTHKMAKRRIKITGTGKVMAFKSGKRHQNTGKSGDEIRGKGKGFVLAKAEWARMKLMLPRGK.

It belongs to the bacterial ribosomal protein bL35 family. Part of the 50S ribosomal subunit. Contacts proteins L15 and L33.

Its function is as follows. Binds the 23S rRNA. The protein is Large ribosomal subunit protein bL35 (rpmI) of Deinococcus radiodurans (strain ATCC 13939 / DSM 20539 / JCM 16871 / CCUG 27074 / LMG 4051 / NBRC 15346 / NCIMB 9279 / VKM B-1422 / R1).